The sequence spans 491 residues: CTD small phosphatase-like protein 1 (491 aa).

4 disordered regions span residues 1–53 (MTYA…SLDY), 140–198 (KLTK…TARR), 221–249 (KIQS…TGPP), and 261–282 (TVTG…DGVT). Residues 17 to 26 (VPPPRTPVGP) show a composition bias toward pro residues. The segment covering 37-49 (SASQPLQPKNGAN) has biased composition (polar residues). Positions 141 to 156 (LTKDEKNGGKMNRDGG) are enriched in basic and acidic residues. Residues 176–187 (ASTPLNSFSANA) show a composition bias toward polar residues. Residues 223 to 237 (QSSQRTNSTNNNHQN) are compositionally biased toward low complexity. Polar residues-rich tracts occupy residues 238–249 (GRPSTPTNTGPP) and 264–276 (GLPT…QQNG). The FCP1 homology domain occupies 307-465 (QDSNKKCLVI…LDILPSLEHL (159 aa)). Catalysis depends on Asp-317, which acts as the 4-aspartylphosphate intermediate. Mg(2+) contacts are provided by Asp-317, Asp-319, and Asn-428. Asp-319 functions as the Proton donor in the catalytic mechanism.

As to quaternary structure, may interact (via phosphatase domain) with cpna-1. Isoform a and isoform b may interact with lim-9 (via LIM zinc-binding domain). Isoform a and isoform b may interact (via FCP1 homology domain) with unc-89 (via fibronectin type-III domain 1, Ig-like C2-type domain 48/49 and protein kinase domain 1 or Ig-like C2-type domain 50, fibronectin type-III domain 2 and protein kinase domain 2); the interaction may act as a molecular bridge to bring two unc-89 molecules together or to stabilize a loop between the 2 protein kinase domains. Requires Mg(2+) as cofactor. As to expression, expressed in pharyngeal, vulval and body wall muscles.

The protein resides in the cytoplasm. It is found in the myofibril. It localises to the sarcomere. Its subcellular location is the m line. The catalysed reaction is O-phospho-L-seryl-[protein] + H2O = L-seryl-[protein] + phosphate. It carries out the reaction O-phospho-L-threonyl-[protein] + H2O = L-threonyl-[protein] + phosphate. Inhibited by beryllium trifluoride (BeF(3-)) and tetrafluoroaluminate (AlF(4-)) but not by sodium fluoride (NaF) or sodium orthovanadate (Na3VO4). Phosphatase which may play a role in the egg laying muscles. The polypeptide is CTD small phosphatase-like protein 1 (Caenorhabditis elegans).